Reading from the N-terminus, the 107-residue chain is Nucleoid-associated protein XF_1808 (107 aa).

Belongs to the YbaB/EbfC family. As to quaternary structure, homodimer.

It localises to the cytoplasm. It is found in the nucleoid. In terms of biological role, binds to DNA and alters its conformation. May be involved in regulation of gene expression, nucleoid organization and DNA protection. The sequence is that of Nucleoid-associated protein XF_1808 from Xylella fastidiosa (strain 9a5c).